A 289-amino-acid polypeptide reads, in one-letter code: Diaminopimelate epimerase (289 aa).

The substrate site is built by Asn13, Gln47, and Asn67. Cys76 acts as the Proton donor in catalysis. Substrate contacts are provided by residues 77–78 (GN), Asn167, Asn200, and 218–219 (ER). Residue Cys227 is the Proton acceptor of the active site. Residue 228-229 (GT) coordinates substrate.

It belongs to the diaminopimelate epimerase family. In terms of assembly, homodimer.

The protein resides in the cytoplasm. It carries out the reaction (2S,6S)-2,6-diaminopimelate = meso-2,6-diaminopimelate. Its pathway is amino-acid biosynthesis; L-lysine biosynthesis via DAP pathway; DL-2,6-diaminopimelate from LL-2,6-diaminopimelate: step 1/1. Functionally, catalyzes the stereoinversion of LL-2,6-diaminopimelate (L,L-DAP) to meso-diaminopimelate (meso-DAP), a precursor of L-lysine and an essential component of the bacterial peptidoglycan. The sequence is that of Diaminopimelate epimerase from Burkholderia ambifaria (strain ATCC BAA-244 / DSM 16087 / CCUG 44356 / LMG 19182 / AMMD) (Burkholderia cepacia (strain AMMD)).